The sequence spans 281 residues: NAD kinase (281 aa).

Aspartate 61 functions as the Proton acceptor in the catalytic mechanism. NAD(+) contacts are provided by residues 61–62, 134–135, arginine 145, aspartate 164, 175–180, and glutamine 234; these read DG, ND, and TAYSLS.

It belongs to the NAD kinase family. A divalent metal cation is required as a cofactor.

The protein localises to the cytoplasm. The enzyme catalyses NAD(+) + ATP = ADP + NADP(+) + H(+). In terms of biological role, involved in the regulation of the intracellular balance of NAD and NADP, and is a key enzyme in the biosynthesis of NADP. Catalyzes specifically the phosphorylation on 2'-hydroxyl of the adenosine moiety of NAD to yield NADP. The sequence is that of NAD kinase from Clostridium botulinum (strain Loch Maree / Type A3).